We begin with the raw amino-acid sequence, 123 residues long: Large ribosomal subunit protein bL12 (123 aa).

It belongs to the bacterial ribosomal protein bL12 family. Homodimer. Part of the ribosomal stalk of the 50S ribosomal subunit. Forms a multimeric L10(L12)X complex, where L10 forms an elongated spine to which 2 to 4 L12 dimers bind in a sequential fashion. Binds GTP-bound translation factors.

In terms of biological role, forms part of the ribosomal stalk which helps the ribosome interact with GTP-bound translation factors. Is thus essential for accurate translation. The protein is Large ribosomal subunit protein bL12 of Pseudoalteromonas atlantica (strain T6c / ATCC BAA-1087).